The chain runs to 336 residues: MYYPLVRKALFQLDPERAHELTFRQLKRVSGTPLEFLVRQSVPTKPVSCMGLSFKNPVGLAAGLDKDGECIDALGAMGFGFIEVGTVTPRPQVGNDKPRLFRIVEAEGLINRMGFNNHGVDNLIENVKKSHFGGILGINIGKNKDTPVEQGKEDYLICMDKIYPYAGYIAINISSPNTPGLRSLQYGEALDDLLAAIKDKQTELHQRHHKYVPVAVKIAPDLTEEELIQIADSLVRHNIDGVIATNTTLDRSLIQGLNYCEQAGGLSGRPLQLRSTEVIHRLSQELKGRLPIIGVGGIDSVTAAREKMAAGASLIQIYSGFIFRGPGLIKNIVTHI.

FMN-binding positions include 62 to 66 (AGLDK) and Thr86. Lys66 is a substrate binding site. 111 to 115 (NRMGF) serves as a coordination point for substrate. FMN is bound by residues Asn139 and Asn172. Asn172 is a substrate binding site. The active-site Nucleophile is Ser175. A substrate-binding site is contributed by Asn177. Residues Lys217 and Thr245 each contribute to the FMN site. 246–247 (NT) is a binding site for substrate. FMN-binding positions include Gly268, Gly297, and 318–319 (YS).

Belongs to the dihydroorotate dehydrogenase family. Type 2 subfamily. As to quaternary structure, monomer. FMN serves as cofactor.

The protein resides in the cell membrane. It catalyses the reaction (S)-dihydroorotate + a quinone = orotate + a quinol. Its pathway is pyrimidine metabolism; UMP biosynthesis via de novo pathway; orotate from (S)-dihydroorotate (quinone route): step 1/1. In terms of biological role, catalyzes the conversion of dihydroorotate to orotate with quinone as electron acceptor. In Yersinia pseudotuberculosis serotype O:1b (strain IP 31758), this protein is Dihydroorotate dehydrogenase (quinone).